The following is a 915-amino-acid chain: Alanine--tRNA ligase (915 aa).

Positions 609, 613, 712, and 716 each coordinate Zn(2+).

The protein belongs to the class-II aminoacyl-tRNA synthetase family. Zn(2+) is required as a cofactor.

It is found in the cytoplasm. It catalyses the reaction tRNA(Ala) + L-alanine + ATP = L-alanyl-tRNA(Ala) + AMP + diphosphate. In terms of biological role, catalyzes the attachment of alanine to tRNA(Ala) in a two-step reaction: alanine is first activated by ATP to form Ala-AMP and then transferred to the acceptor end of tRNA(Ala). Also edits incorrectly charged Ser-tRNA(Ala) and Gly-tRNA(Ala) via its editing domain. In Methanoculleus marisnigri (strain ATCC 35101 / DSM 1498 / JR1), this protein is Alanine--tRNA ligase.